Here is a 442-residue protein sequence, read N- to C-terminus: Protein PRRC1-A (442 aa).

A disordered region spans residues 1-27 (MMEESGIETTPPSTPPPSTIGTSVPAA).

Belongs to the PRRC1 family.

The protein localises to the golgi apparatus. The polypeptide is Protein PRRC1-A (prrc1-a) (Xenopus laevis (African clawed frog)).